The sequence spans 304 residues: Meiotically up-regulated gene 86 protein (304 aa).

Residues M1–S12 show a composition bias toward low complexity. The segment at M1–F23 is disordered. A run of 6 helical transmembrane segments spans residues P93 to V113, M123 to E143, F150 to I170, A188 to V208, L212 to F232, and V247 to L267.

This sequence belongs to the acetate uptake transporter (AceTr) (TC 2.A.96) family.

Its subcellular location is the endoplasmic reticulum membrane. It is found in the golgi apparatus. The protein resides in the golgi stack membrane. The protein localises to the vacuole membrane. Its function is as follows. Has a role in meiosis. This chain is Meiotically up-regulated gene 86 protein (mug86), found in Schizosaccharomyces pombe (strain 972 / ATCC 24843) (Fission yeast).